Consider the following 1052-residue polypeptide: Error-prone DNA polymerase (1052 aa).

This sequence belongs to the DNA polymerase type-C family. DnaE2 subfamily.

Its subcellular location is the cytoplasm. The enzyme catalyses DNA(n) + a 2'-deoxyribonucleoside 5'-triphosphate = DNA(n+1) + diphosphate. DNA polymerase involved in damage-induced mutagenesis and translesion synthesis (TLS). It is not the major replicative DNA polymerase. In Bordetella parapertussis (strain 12822 / ATCC BAA-587 / NCTC 13253), this protein is Error-prone DNA polymerase.